Consider the following 286-residue polypeptide: Pantothenate synthetase (286 aa).

30–37 (MGNLHSGH) provides a ligand contact to ATP. Residue H37 is the Proton donor of the active site. Q61 lines the (R)-pantoate pocket. Q61 is a binding site for beta-alanine. Residue 149 to 152 (GQKD) participates in ATP binding. A (R)-pantoate-binding site is contributed by Q155. ATP is bound by residues V178 and 186 to 189 (LSSR).

The protein belongs to the pantothenate synthetase family. Homodimer.

The protein resides in the cytoplasm. The enzyme catalyses (R)-pantoate + beta-alanine + ATP = (R)-pantothenate + AMP + diphosphate + H(+). It functions in the pathway cofactor biosynthesis; (R)-pantothenate biosynthesis; (R)-pantothenate from (R)-pantoate and beta-alanine: step 1/1. Functionally, catalyzes the condensation of pantoate with beta-alanine in an ATP-dependent reaction via a pantoyl-adenylate intermediate. The sequence is that of Pantothenate synthetase from Pseudomonas fluorescens (strain ATCC BAA-477 / NRRL B-23932 / Pf-5).